Consider the following 152-residue polypeptide: SsrA-binding protein (152 aa).

The disordered stretch occupies residues 124–152 (KKLHDKRDTAAERDWQRDKARLMKGDRGD). The segment covering 128 to 152 (DKRDTAAERDWQRDKARLMKGDRGD) has biased composition (basic and acidic residues).

This sequence belongs to the SmpB family.

It is found in the cytoplasm. Required for rescue of stalled ribosomes mediated by trans-translation. Binds to transfer-messenger RNA (tmRNA), required for stable association of tmRNA with ribosomes. tmRNA and SmpB together mimic tRNA shape, replacing the anticodon stem-loop with SmpB. tmRNA is encoded by the ssrA gene; the 2 termini fold to resemble tRNA(Ala) and it encodes a 'tag peptide', a short internal open reading frame. During trans-translation Ala-aminoacylated tmRNA acts like a tRNA, entering the A-site of stalled ribosomes, displacing the stalled mRNA. The ribosome then switches to translate the ORF on the tmRNA; the nascent peptide is terminated with the 'tag peptide' encoded by the tmRNA and targeted for degradation. The ribosome is freed to recommence translation, which seems to be the essential function of trans-translation. The polypeptide is SsrA-binding protein (Caulobacter vibrioides (strain ATCC 19089 / CIP 103742 / CB 15) (Caulobacter crescentus)).